We begin with the raw amino-acid sequence, 437 residues long: MSKYNVLIVGSGGREHALAWKVKQSQHVQNVFVAPGNAGTGMDATNVDLDPADHDAVIQFAKENNVGLVIVGPEAPLVAGLVDALTDAGLRAFGPSKAASELEGSKVFCKNLLRSADIPTADYRTFRSADDASRYIKDRFSEPTDPVNVVVKADGLAAGKGVVVCDTRSEALEAIDRIAARKEFGAAGKELIIEERLTGPEVSVLAITDGETIVTLPPAQDHKPANDGDTGPNTGGMGAYCPAPVLDEETLAKVESSILVPVVHAMKRSRRPFKGVLYAGLMLTPAGPKVLEFNVRFGDPECQPLLMRLKTDLVEVMQAVVDGKLEETGPLEFDPRPAICVVMASEGYPADYEKGHAITGIESADKMENVKVFHAGTQRVDGEVVNTGGRVLGVTAMGDSISAAKLQAYKAVREIRWQGAWCRKDISDKALVTADKA.

Residues 110–322 (KNLLRSADIP…LVEVMQAVVD (213 aa)) enclose the ATP-grasp domain. Residue 142 to 203 (EPTDPVNVVV…EERLTGPEVS (62 aa)) coordinates ATP. The Mg(2+) site is built by E292 and N294.

The protein belongs to the GARS family. The cofactor is Mg(2+). Mn(2+) is required as a cofactor.

It catalyses the reaction 5-phospho-beta-D-ribosylamine + glycine + ATP = N(1)-(5-phospho-beta-D-ribosyl)glycinamide + ADP + phosphate + H(+). It participates in purine metabolism; IMP biosynthesis via de novo pathway; N(1)-(5-phospho-D-ribosyl)glycinamide from 5-phospho-alpha-D-ribose 1-diphosphate: step 2/2. This is Phosphoribosylamine--glycine ligase from Rhodopirellula baltica (strain DSM 10527 / NCIMB 13988 / SH1).